The sequence spans 345 residues: Phosphoribosylformylglycinamidine cyclo-ligase (345 aa).

Belongs to the AIR synthase family.

Its subcellular location is the cytoplasm. The catalysed reaction is 2-formamido-N(1)-(5-O-phospho-beta-D-ribosyl)acetamidine + ATP = 5-amino-1-(5-phospho-beta-D-ribosyl)imidazole + ADP + phosphate + H(+). It participates in purine metabolism; IMP biosynthesis via de novo pathway; 5-amino-1-(5-phospho-D-ribosyl)imidazole from N(2)-formyl-N(1)-(5-phospho-D-ribosyl)glycinamide: step 2/2. The chain is Phosphoribosylformylglycinamidine cyclo-ligase from Shewanella putrefaciens (strain CN-32 / ATCC BAA-453).